A 129-amino-acid chain; its full sequence is Ribonuclease P protein component (129 aa).

Belongs to the RnpA family. In terms of assembly, consists of a catalytic RNA component (M1 or rnpB) and a protein subunit.

It catalyses the reaction Endonucleolytic cleavage of RNA, removing 5'-extranucleotides from tRNA precursor.. Functionally, RNaseP catalyzes the removal of the 5'-leader sequence from pre-tRNA to produce the mature 5'-terminus. It can also cleave other RNA substrates such as 4.5S RNA. The protein component plays an auxiliary but essential role in vivo by binding to the 5'-leader sequence and broadening the substrate specificity of the ribozyme. The chain is Ribonuclease P protein component from Prochlorococcus marinus (strain MIT 9515).